The following is a 298-amino-acid chain: Flavin-dependent thymidylate synthase (298 aa).

The 211-residue stretch at 41–251 (GFVRLVDYMG…PLTYAAFVEY (211 aa)) folds into the ThyX domain. Residues threonine 87, 110-112 (RHR), and glutamate 118 each bind FAD. Residues 107 to 110 (QWVR), 118 to 122 (EYSAR), and arginine 190 each bind dUMP. The ThyX motif signature appears at 110 to 120 (RHRTANVNEYS). FAD is bound by residues 206–208 (DLH) and histidine 212. Residue arginine 217 coordinates dUMP. The Involved in ionization of N3 of dUMP, leading to its activation role is filled by arginine 217.

Belongs to the thymidylate synthase ThyX family. In terms of assembly, homotetramer. It depends on FAD as a cofactor.

It catalyses the reaction dUMP + (6R)-5,10-methylene-5,6,7,8-tetrahydrofolate + NADPH + H(+) = dTMP + (6S)-5,6,7,8-tetrahydrofolate + NADP(+). It participates in pyrimidine metabolism; dTTP biosynthesis. Catalyzes the reductive methylation of 2'-deoxyuridine-5'-monophosphate (dUMP) to 2'-deoxythymidine-5'-monophosphate (dTMP) while utilizing 5,10-methylenetetrahydrofolate (mTHF) as the methyl donor, and NADPH and FADH(2) as the reductant. This chain is Flavin-dependent thymidylate synthase, found in Ehrlichia ruminantium (strain Welgevonden).